The sequence spans 240 residues: DNA repair protein RecO (240 aa).

The protein belongs to the RecO family.

Involved in DNA repair and RecF pathway recombination. The sequence is that of DNA repair protein RecO from Pseudoalteromonas atlantica (strain T6c / ATCC BAA-1087).